Reading from the N-terminus, the 335-residue chain is Pyridoxal 5'-phosphate synthase subunit PdxS (335 aa).

Residue D30 participates in D-ribose 5-phosphate binding. Residue K87 is the Schiff-base intermediate with D-ribose 5-phosphate of the active site. Residue G159 coordinates D-ribose 5-phosphate. R171 serves as a coordination point for D-glyceraldehyde 3-phosphate. Residues G257 and 278–279 contribute to the D-ribose 5-phosphate site; that span reads GS.

The protein belongs to the PdxS/SNZ family. In terms of assembly, in the presence of PdxT, forms a dodecamer of heterodimers.

The catalysed reaction is aldehydo-D-ribose 5-phosphate + D-glyceraldehyde 3-phosphate + L-glutamine = pyridoxal 5'-phosphate + L-glutamate + phosphate + 3 H2O + H(+). The protein operates within cofactor biosynthesis; pyridoxal 5'-phosphate biosynthesis. Its function is as follows. Catalyzes the formation of pyridoxal 5'-phosphate from ribose 5-phosphate (RBP), glyceraldehyde 3-phosphate (G3P) and ammonia. The ammonia is provided by the PdxT subunit. Can also use ribulose 5-phosphate and dihydroxyacetone phosphate as substrates, resulting from enzyme-catalyzed isomerization of RBP and G3P, respectively. This chain is Pyridoxal 5'-phosphate synthase subunit PdxS, found in Thermococcus kodakarensis (strain ATCC BAA-918 / JCM 12380 / KOD1) (Pyrococcus kodakaraensis (strain KOD1)).